Reading from the N-terminus, the 239-residue chain is MATAVLFDLDNTLYPYPPCNQAGKAAALERAQELGYDFDHESFAEFYQAGRREVKRDTGGTAASHERYLYFKRALELHTGSPRPGDALALGDAYWSAYLEEMSLVPDAKETLEELQEQGVDIAITTNLTTTIQLAKLERLGLTDYVDLVLTSEETGQEKPASVMFTLPLARLDSRASEAVMVGDDLEADIAGANAVGLETVLFDPSEESDATESADRAATERQADHSIDTLGELTDLVS.

Residue D8 is the Nucleophile of the active site. Residues D8, D10, and D184 each coordinate Mg(2+). D10 acts as the Proton donor in catalysis. Residues 205 to 239 form a disordered region; that stretch reads PSEESDATESADRAATERQADHSIDTLGELTDLVS. Residues 214–228 are compositionally biased toward basic and acidic residues; the sequence is SADRAATERQADHSI.

The protein belongs to the HAD-like hydrolase superfamily. Mg(2+) is required as a cofactor. The cofactor is Mn(2+). It depends on Co(2+) as a cofactor. Ni(2+) serves as cofactor.

It catalyses the reaction D-ribulose 1,5-bisphosphate + H2O = D-ribulose 1-phosphate + phosphate. Requires both monovalent and divalent ions for optimal activity. Optimal KCl concentration is higher than 2.5 M. In terms of biological role, phosphatase involved in the non-carboxylating pentose bisphosphate pathway, a nucleoside degradation pathway present in some halophilic archaea. Catalyzes the dephosphorylation of ribulose 1,5-bisphosphate (RuBP) to ribulose 1-phosphate (Ru1P). Shows a strict substrate specificity toward RuBP. The sequence is that of Ribulose-1,5-bisphosphate 5-phosphatase from Halopiger xanaduensis (strain DSM 18323 / JCM 14033 / SH-6).